We begin with the raw amino-acid sequence, 166 residues long: Cyclin-dependent kinase 4 inhibitor D (166 aa).

The residue at position 1 (M1) is an N-acetylmethionine. ANK repeat units lie at residues 41 to 69 (FGKT…SPNV), 73 to 102 (SGTS…DVNA), 106 to 135 (TGSL…LHHR), and 138 to 165 (SGLT…MMIP).

It belongs to the CDKN2 cyclin-dependent kinase inhibitor family. In terms of assembly, interacts with CDK6.

The protein localises to the nucleus. It localises to the cytoplasm. Interacts strongly with CDK4 and CDK6 and inhibits them. This Mus musculus (Mouse) protein is Cyclin-dependent kinase 4 inhibitor D (Cdkn2d).